Consider the following 340-residue polypeptide: Ephrin-B3 (340 aa).

Residues 1-27 form the signal peptide; the sequence is MGAPHFGPGGVQVGALLLLGFAGLVSG. An Ephrin RBD domain is found at 28–167; the sequence is LSLEPVYWNS…TRGMKVLLRV (140 aa). At 28 to 227 the chain is on the extracellular side; it reads LSLEPVYWNS…GPLPPPSMPA (200 aa). Disulfide bonds link Cys62/Cys104 and Cys92/Cys156. The disordered stretch occupies residues 168-227; that stretch reads GQSPRGGAVPRKPVSEMPMERDRGAAHSAEPGRDTIPGDPSSNATSRGAEGPLPPPSMPA. Residues 185–200 show a composition bias toward basic and acidic residues; it reads PMERDRGAAHSAEPGR. The N-linked (GlcNAc...) asparagine glycan is linked to Asn210. Residues 228 to 248 traverse the membrane as a helical segment; that stretch reads VAGAAGGMALLLLGVAGAGGA. The Cytoplasmic segment spans residues 249-340; sequence MCWRRRRAKP…QSPPNIYYKV (92 aa). The interval 254-300 is disordered; the sequence is RRAKPSESRHPGPGSFGRGGSLGLGGGGGMGPREAEPGELGIALRGG. The segment covering 267-284 has biased composition (gly residues); sequence GSFGRGGSLGLGGGGGMG. An Omega-N-methylarginine modification is found at Arg271. At Ser274 the chain carries Phosphoserine. The PDZ-binding signature appears at 338 to 340; the sequence is YKV.

The protein belongs to the ephrin family. Interacts with GRIP1 and GRIP2. As to expression, expressed on lateral floor plate cells, specifically on commissural axon segments that have passed through the floor plate. Expressed in cells of the retinal ganglion cell layer during retinal axon guidance to the optic disk. Expressed in myogenic progenitor cells.

The protein localises to the membrane. In terms of biological role, cell surface transmembrane ligand for Eph receptors, a family of receptor tyrosine kinases which are crucial for migration, repulsion and adhesion during neuronal, vascular and epithelial development. Binds promiscuously Eph receptors residing on adjacent cells, leading to contact-dependent bidirectional signaling into neighboring cells. The signaling pathway downstream of the receptor is referred to as forward signaling while the signaling pathway downstream of the ephrin ligand is referred to as reverse signaling. May play a pivotal role in forebrain function. Binds to, and induce the collapse of, commissural axons/growth cones in vitro. May play a role in constraining the orientation of longitudinally projecting axons. This Mus musculus (Mouse) protein is Ephrin-B3 (Efnb3).